Consider the following 335-residue polypeptide: Methionine aminopeptidase 1D, mitochondrial (335 aa).

The N-terminal 19 residues, Met-1–Phe-19, are a transit peptide targeting the mitochondrion. Position 161 (His-161) interacts with substrate. The a divalent metal cation site is built by Asp-178, Asp-189, and His-252. His-259 lines the substrate pocket. Positions 284 and 315 each coordinate a divalent metal cation.

This sequence belongs to the peptidase M24A family. Methionine aminopeptidase type 1 subfamily. The cofactor is Co(2+). Zn(2+) serves as cofactor. Requires Mn(2+) as cofactor. Fe(2+) is required as a cofactor. In terms of tissue distribution, overexpressed in colon cancer cell lines and colon tumors as compared to normal tissues (at protein level).

The protein localises to the mitochondrion. The enzyme catalyses Release of N-terminal amino acids, preferentially methionine, from peptides and arylamides.. Functionally, removes the N-terminal methionine from nascent proteins. The N-terminal methionine is often cleaved when the second residue in the primary sequence is small and uncharged (Met-Ala-, Cys, Gly, Pro, Ser, Thr, or Val). Requires deformylation of the N(alpha)-formylated initiator methionine before it can be hydrolyzed. May play a role in colon tumorigenesis. The chain is Methionine aminopeptidase 1D, mitochondrial (METAP1D) from Homo sapiens (Human).